Consider the following 121-residue polypeptide: Putative iron-sulfur cluster insertion protein ErpA (121 aa).

Iron-sulfur cluster is bound by residues Cys49, Cys113, and Cys115.

It belongs to the HesB/IscA family. Homodimer. The cofactor is iron-sulfur cluster.

In terms of biological role, required for insertion of 4Fe-4S clusters. This Verminephrobacter eiseniae (strain EF01-2) protein is Putative iron-sulfur cluster insertion protein ErpA.